The following is a 27-amino-acid chain: Secretin (27 aa).

Residue Met27 is modified to Methionine amide.

Belongs to the glucagon family.

It localises to the secreted. Functionally, hormone involved in different processes, such as regulation of the pH of the duodenal content, food intake and water homeostasis. Exerts its biological effects by binding to secretin receptor (SCTR), a G-protein coupled receptor expressed in the basolateral domain of several cells. The polypeptide is Secretin (Gallus gallus (Chicken)).